A 207-amino-acid polypeptide reads, in one-letter code: 3-isopropylmalate dehydratase small subunit (207 aa).

Belongs to the LeuD family. LeuD type 1 subfamily. As to quaternary structure, heterodimer of LeuC and LeuD.

It catalyses the reaction (2R,3S)-3-isopropylmalate = (2S)-2-isopropylmalate. It functions in the pathway amino-acid biosynthesis; L-leucine biosynthesis; L-leucine from 3-methyl-2-oxobutanoate: step 2/4. Its function is as follows. Catalyzes the isomerization between 2-isopropylmalate and 3-isopropylmalate, via the formation of 2-isopropylmaleate. The polypeptide is 3-isopropylmalate dehydratase small subunit (Acidithiobacillus ferrooxidans (strain ATCC 23270 / DSM 14882 / CIP 104768 / NCIMB 8455) (Ferrobacillus ferrooxidans (strain ATCC 23270))).